The following is a 514-amino-acid chain: 1,25-dihydroxyvitamin D(3) 24-hydroxylase, mitochondrial (514 aa).

The transit peptide at 1–35 directs the protein to the mitochondrion; it reads MSCPIDKRRTLIAFLRRLRDLGQPPRSVTSKASAS. Cys-462 serves as a coordination point for heme.

The protein belongs to the cytochrome P450 family. Requires heme as cofactor.

It localises to the mitochondrion. It carries out the reaction calcitriol + 2 reduced [adrenodoxin] + O2 + 2 H(+) = calcitetrol + 2 oxidized [adrenodoxin] + H2O. The catalysed reaction is calcitetrol + 2 reduced [adrenodoxin] + O2 + 2 H(+) = (1S)-1,25-dihydroxy-24-oxocalciol + 2 oxidized [adrenodoxin] + 2 H2O. The enzyme catalyses (1S)-1,25-dihydroxy-24-oxocalciol + 2 reduced [adrenodoxin] + O2 + 2 H(+) = (1S)-1,23,25-trihydroxy-24-oxocalciol + 2 oxidized [adrenodoxin] + H2O. It catalyses the reaction (1S)-1,23-dihydroxy-24,25,26,27-tetranorcalciol + 2 reduced [adrenodoxin] + O2 + 2 H(+) = (1S)-1-hydroxy-23-oxo-24,25,26,27-tetranorcalciol + 2 oxidized [adrenodoxin] + 2 H2O. It carries out the reaction (1S)-1-hydroxy-23-oxo-24,25,26,27-tetranorcalciol + 2 reduced [adrenodoxin] + O2 + H(+) = calcitroate + 2 oxidized [adrenodoxin] + H2O. The catalysed reaction is calcidiol + 2 reduced [adrenodoxin] + O2 + 2 H(+) = secalciferol + 2 oxidized [adrenodoxin] + H2O. The enzyme catalyses secalciferol + 2 reduced [adrenodoxin] + O2 + 2 H(+) = 25-hydroxy-24-oxocalciol + 2 oxidized [adrenodoxin] + 2 H2O. It catalyses the reaction 25-hydroxy-24-oxocalciol + 2 reduced [adrenodoxin] + O2 + 2 H(+) = 23S,25-dihydroxy-24-oxocholecalciferol + 2 oxidized [adrenodoxin] + H2O. It carries out the reaction 20S,23-dihydroxycholecalciferol + 2 reduced [adrenodoxin] + O2 + 2 H(+) = 20S,23,25-trihydroxycholecalciferol + 2 oxidized [adrenodoxin] + H2O. The catalysed reaction is 20S,23-dihydroxycholecalciferol + 2 reduced [adrenodoxin] + O2 + 2 H(+) = 20S,23,24-trihydroxycholecalciferol + 2 oxidized [adrenodoxin] + H2O. The enzyme catalyses 20S-hydroxycholecalciferol + 2 reduced [adrenodoxin] + O2 + 2 H(+) = 20S,25-dihydroxycholecalciferol + 2 oxidized [adrenodoxin] + H2O. It catalyses the reaction 20S-hydroxycholecalciferol + 2 reduced [adrenodoxin] + O2 + 2 H(+) = 20S,24S-dihydroxycholecalciferol + 2 oxidized [adrenodoxin] + H2O. It carries out the reaction 20S-hydroxycholecalciferol + 2 reduced [adrenodoxin] + O2 + 2 H(+) = 20S,24R-dihydroxycholecalciferol + 2 oxidized [adrenodoxin] + H2O. Functionally, a cytochrome P450 monooxygenase with a key role in vitamin D catabolism and calcium homeostasis. Via C24-oxidation pathway, catalyzes the inactivation of both the vitamin D precursor calcidiol (25-hydroxyvitamin D(3)) and the active hormone calcitriol (1-alpha,25-dihydroxyvitamin D(3)). With initial hydroxylation at C-24 (via C24-oxidation pathway), performs a sequential 6-step oxidation of calcitriol leading to the formation of the biliary metabolite calcitroic acid. Hydroxylates at C-24 or C-25 other vitamin D active metabolites, such as CYP11A1-derived secosteroids 20S-hydroxycholecalciferol and 20S,23-dihydroxycholecalciferol. Mechanistically, uses molecular oxygen inserting one oxygen atom into a substrate, and reducing the second into a water molecule, with two electrons provided by NADPH via FDXR/adrenodoxin reductase and FDX1/adrenodoxin. The polypeptide is 1,25-dihydroxyvitamin D(3) 24-hydroxylase, mitochondrial (Cyp24a1) (Rattus norvegicus (Rat)).